Consider the following 428-residue polypeptide: Serine--tRNA ligase (428 aa).

An L-serine-binding site is contributed by 231-233; that stretch reads TSE. ATP contacts are provided by residues 262–264 and V278; that span reads RRE. Residue E285 coordinates L-serine. Position 349-352 (349-352) interacts with ATP; the sequence is ELTS. T384 contacts L-serine.

It belongs to the class-II aminoacyl-tRNA synthetase family. Type-1 seryl-tRNA synthetase subfamily. As to quaternary structure, homodimer. The tRNA molecule binds across the dimer.

It is found in the cytoplasm. The enzyme catalyses tRNA(Ser) + L-serine + ATP = L-seryl-tRNA(Ser) + AMP + diphosphate + H(+). The catalysed reaction is tRNA(Sec) + L-serine + ATP = L-seryl-tRNA(Sec) + AMP + diphosphate + H(+). The protein operates within aminoacyl-tRNA biosynthesis; selenocysteinyl-tRNA(Sec) biosynthesis; L-seryl-tRNA(Sec) from L-serine and tRNA(Sec): step 1/1. Its function is as follows. Catalyzes the attachment of serine to tRNA(Ser). Is also able to aminoacylate tRNA(Sec) with serine, to form the misacylated tRNA L-seryl-tRNA(Sec), which will be further converted into selenocysteinyl-tRNA(Sec). This chain is Serine--tRNA ligase, found in Bifidobacterium longum (strain NCC 2705).